Here is a 231-residue protein sequence, read N- to C-terminus: GTP cyclohydrolase III (231 aa).

The protein belongs to the archaeal-type GTP cyclohydrolase family.

The enzyme catalyses GTP + 3 H2O = 2-amino-5-formylamino-6-(5-phospho-D-ribosylamino)pyrimidin-4(3H)-one + 2 phosphate + 2 H(+). Catalyzes the formation of 2-amino-5-formylamino-6-ribofuranosylamino-4(3H)-pyrimidinone ribonucleotide monophosphate and inorganic phosphate from GTP. Also has an independent pyrophosphate phosphohydrolase activity. The chain is GTP cyclohydrolase III from Saccharolobus solfataricus (strain ATCC 35092 / DSM 1617 / JCM 11322 / P2) (Sulfolobus solfataricus).